Here is a 246-residue protein sequence, read N- to C-terminus: Bis(5'-nucleosyl)-tetraphosphatase PrpE [asymmetrical] (246 aa).

This sequence belongs to the PrpE family. Ni(2+) serves as cofactor.

The catalysed reaction is P(1),P(4)-bis(5'-guanosyl) tetraphosphate + H2O = GMP + GTP + 2 H(+). In terms of biological role, asymmetrically hydrolyzes Ap4p to yield AMP and ATP. The chain is Bis(5'-nucleosyl)-tetraphosphatase PrpE [asymmetrical] from Bacillus thuringiensis (strain Al Hakam).